The sequence spans 430 residues: Glutamate-1-semialdehyde 2,1-aminomutase (430 aa).

Lys267 carries the N6-(pyridoxal phosphate)lysine modification.

It belongs to the class-III pyridoxal-phosphate-dependent aminotransferase family. HemL subfamily. As to quaternary structure, homodimer. It depends on pyridoxal 5'-phosphate as a cofactor.

The protein resides in the cytoplasm. The catalysed reaction is (S)-4-amino-5-oxopentanoate = 5-aminolevulinate. It participates in porphyrin-containing compound metabolism; protoporphyrin-IX biosynthesis; 5-aminolevulinate from L-glutamyl-tRNA(Glu): step 2/2. This chain is Glutamate-1-semialdehyde 2,1-aminomutase, found in Lawsonia intracellularis (strain PHE/MN1-00).